Reading from the N-terminus, the 959-residue chain is Oxysterol-binding protein-related protein 6 (959 aa).

The disordered stretch occupies residues 1 to 60 (MSSDEKGISPAHKTSTPTHRSASSSTSSQRESRQSIHVLERTASSSTEPSVSRQLLEPEP). The residue at position 2 (S2) is an N-acetylserine. Residues 14-29 (TSTPTHRSASSSTSSQ) show a composition bias toward low complexity. Basic and acidic residues predominate over residues 30–40 (RESRQSIHVLE). Residue S35 is modified to Phosphoserine. Residues 42-53 (TASSSTEPSVSR) are compositionally biased toward polar residues. The region spanning 86 to 181 (PDRHEGFMLK…WVSKLRHHRL (96 aa)) is the PH domain. A phosphoserine mark is found at S190 and S290.

This sequence belongs to the OSBP family. As to quaternary structure, homodimer. Interacts with OSBPL3. In terms of tissue distribution, expressed in skin, respiratory epithelium, small intestine epithelium, pancreas, striated muscle, brain, spinal ganglia, and nervous plexus of the intestine (at protein level). In the brain, specifically in the cerebellum, it is expressed in Purkinje and granule cells. Expressed in hepatocytes and macrophages.

It localises to the nucleus envelope. The protein localises to the cytoplasm. Its subcellular location is the cytosol. The protein resides in the endoplasmic reticulum membrane. It is found in the cell membrane. It localises to the endosome membrane. Functionally, regulates cellular transport and efflux of cholesterol. Plays a role in phosphatidylinositol-4-phophate (PI4P) turnover at the neuronal membrane. Binds via its PH domain PI4P, phosphatidylinositol-4,5-diphosphate, phosphatidylinositol-3,4,5-triphosphate, and phosphatidic acid. Weakly binds 25-hydroxycholesterol. In Mus musculus (Mouse), this protein is Oxysterol-binding protein-related protein 6 (Osbpl6).